The sequence spans 859 residues: Tripartite terminase subunit 1 (859 aa).

A C3H1-type zinc finger spans residues 231–259 (CCICLDELSVTANQGDTIYKRLGYSVCDH). Basic and acidic residues predominate over residues 512-525 (TRPRADKAGGRAED). The disordered stretch occupies residues 512 to 542 (TRPRADKAGGRAEDGAGDCDDEGYPGAADAT). 782-789 (FESIFQCG) provides a ligand contact to ATP.

Belongs to the herpesviridae TRM1 protein family. Associates with TRM2 and TRM3 to form the tripartite terminase complex. Interacts with portal protein.

Its subcellular location is the host nucleus. Component of the molecular motor that translocates viral genomic DNA in empty capsid during DNA packaging. Forms a tripartite terminase complex together with TRM2 and TRM3 in the host cytoplasm. Once the complex reaches the host nucleus, it interacts with the capsid portal vertex. This portal forms a ring in which genomic DNA is translocated into the capsid. TRM1 carries an endonuclease activity that plays an important role for the cleavage of concatemeric viral DNA into unit length genomes. This Amazona oratrix (yellow-headed parrot) protein is Tripartite terminase subunit 1.